We begin with the raw amino-acid sequence, 436 residues long: Adenylosuccinate synthetase (436 aa).

Residues 12–18 (GDEGKGK) and 40–42 (GHT) contribute to the GTP site. Residue aspartate 13 is the Proton acceptor of the active site. Positions 13 and 40 each coordinate Mg(2+). IMP-binding positions include 13 to 16 (DEGK), 38 to 41 (NAGH), threonine 128, arginine 142, glutamine 223, threonine 238, and arginine 302. Residue histidine 41 is the Proton donor of the active site. Residue 298–304 (TTTGRRR) coordinates substrate. GTP is bound by residues arginine 304, 330–332 (KLD), and 412–414 (SLG).

This sequence belongs to the adenylosuccinate synthetase family. In terms of assembly, homodimer. Mg(2+) serves as cofactor.

Its subcellular location is the cytoplasm. The catalysed reaction is IMP + L-aspartate + GTP = N(6)-(1,2-dicarboxyethyl)-AMP + GDP + phosphate + 2 H(+). Its pathway is purine metabolism; AMP biosynthesis via de novo pathway; AMP from IMP: step 1/2. Functionally, plays an important role in the de novo pathway of purine nucleotide biosynthesis. Catalyzes the first committed step in the biosynthesis of AMP from IMP. This Prochlorococcus marinus subsp. pastoris (strain CCMP1986 / NIES-2087 / MED4) protein is Adenylosuccinate synthetase.